A 235-amino-acid polypeptide reads, in one-letter code: MMMDANEIISFIQNSKKKTPVKVYIKGDIADIDFGPSAKTFITGQTGVVFGEWADIEAALEANKHKIEDYVVENDRRNSAIPLLDLKHIKARIEPGAIIRDQVQIGDNAVIMMGAVINIGAVVGEGTMIDMNAVLGGRATVGKNCHVGAGAVLAGVIEPPSAKPVIVEDDVMIGANAVILEGVTVGKGAVVAAGAIVTEDVPPYTVVAGVPARVIKQIDEKTKAKVEIKQELRQL.

The protein belongs to the transferase hexapeptide repeat family. DapH subfamily.

The catalysed reaction is (S)-2,3,4,5-tetrahydrodipicolinate + acetyl-CoA + H2O = L-2-acetamido-6-oxoheptanedioate + CoA. The protein operates within amino-acid biosynthesis; L-lysine biosynthesis via DAP pathway; LL-2,6-diaminopimelate from (S)-tetrahydrodipicolinate (acetylase route): step 1/3. Functionally, catalyzes the transfer of an acetyl group from acetyl-CoA to tetrahydrodipicolinate. The protein is 2,3,4,5-tetrahydropyridine-2,6-dicarboxylate N-acetyltransferase of Anoxybacillus flavithermus (strain DSM 21510 / WK1).